Consider the following 246-residue polypeptide: Zinc import ATP-binding protein ZnuC (246 aa).

The 220-residue stretch at 24–243 (LKIENLALAY…RTLNEIFSSY (220 aa)) folds into the ABC transporter domain. 56 to 63 (GPNGGGKT) lines the ATP pocket.

Belongs to the ABC transporter superfamily. Zinc importer (TC 3.A.1.15.5) family. In terms of assembly, the complex is composed of two ATP-binding proteins (ZnuC), two transmembrane proteins (ZnuB) and a solute-binding protein (ZnuA).

The protein resides in the cell membrane. The catalysed reaction is Zn(2+)(out) + ATP(in) + H2O(in) = Zn(2+)(in) + ADP(in) + phosphate(in) + H(+)(in). Part of the ABC transporter complex ZnuABC involved in zinc import. Responsible for energy coupling to the transport system. This chain is Zinc import ATP-binding protein ZnuC, found in Wolbachia pipientis wMel.